A 332-amino-acid chain; its full sequence is Putative peptide import ATP-binding protein BMEII0206 (332 aa).

Residues 11 to 261 (LEVSNLSVDF…PLHPYTEGLL (251 aa)) form the ABC transporter domain. 47–54 (GESGSGKS) contacts ATP.

It belongs to the ABC transporter superfamily. The complex is composed of two ATP-binding proteins (BMEII0205 and BMEII0206), two transmembrane proteins (BMEII0207/BMEII0208 and BMEII0209) and a solute-binding protein (BMEII0210).

The protein localises to the cell inner membrane. In terms of biological role, probably part of an ABC transporter complex that could be involved in peptide import. Probably responsible for energy coupling to the transport system. The sequence is that of Putative peptide import ATP-binding protein BMEII0206 from Brucella melitensis biotype 1 (strain ATCC 23456 / CCUG 17765 / NCTC 10094 / 16M).